Reading from the N-terminus, the 479-residue chain is Serine carboxypeptidase-like 29 (479 aa).

Residues 1–28 (MAKTRGSCCLVNALIAIAFLATAHLCEA) form the signal peptide. 2 N-linked (GlcNAc...) asparagine glycosylation sites follow: asparagine 47 and asparagine 144. 3 cysteine pairs are disulfide-bonded: cysteine 93–cysteine 349, cysteine 254–cysteine 266, and cysteine 290–cysteine 317. The active site involves serine 186. A glycan (N-linked (GlcNAc...) asparagine) is linked at asparagine 293. Active-site residues include aspartate 386 and histidine 438.

This sequence belongs to the peptidase S10 family. In terms of tissue distribution, expressed in seedlings, roots, leaves and flowers.

The protein localises to the secreted. In terms of biological role, probable carboxypeptidase. The protein is Serine carboxypeptidase-like 29 (SCPL29) of Arabidopsis thaliana (Mouse-ear cress).